The sequence spans 217 residues: ATP-binding protein BexA (217 aa).

Positions 2 to 217 (IRVNNVCKKY…AYQYYNETQK (216 aa)) constitute an ABC transporter domain. An ATP-binding site is contributed by 38 to 45 (GRNGAGKS).

Belongs to the ABC transporter superfamily.

It localises to the cell inner membrane. Putative ATP-binding protein, and an energy-coupling component of capsule polysaccharide export apparatus. The sequence is that of ATP-binding protein BexA (bexA) from Haemophilus influenzae.